A 144-amino-acid chain; its full sequence is 3-hydroxyacyl-[acyl-carrier-protein] dehydratase FabZ (144 aa).

Residue His-51 is part of the active site.

It belongs to the thioester dehydratase family. FabZ subfamily.

The protein localises to the cytoplasm. The catalysed reaction is a (3R)-hydroxyacyl-[ACP] = a (2E)-enoyl-[ACP] + H2O. Functionally, involved in unsaturated fatty acids biosynthesis. Catalyzes the dehydration of short chain beta-hydroxyacyl-ACPs and long chain saturated and unsaturated beta-hydroxyacyl-ACPs. This chain is 3-hydroxyacyl-[acyl-carrier-protein] dehydratase FabZ, found in Clostridium botulinum (strain Langeland / NCTC 10281 / Type F).